A 503-amino-acid chain; its full sequence is Zinc metalloproteinase nas-14 (503 aa).

An N-terminal signal peptide occupies residues 1–25 (MRLLYSLFHCSAFLVGFTLSVGVLP). The region spanning 116–312 (NLVTYPDKLW…KKVNKLYQCG (197 aa)) is the Peptidase M12A domain. Cystine bridges form between cysteine 158/cysteine 311 and cysteine 182/cysteine 202. N-linked (GlcNAc...) asparagine glycosylation is present at asparagine 192. Residue histidine 210 participates in Zn(2+) binding. Glutamate 211 is a catalytic residue. Zn(2+)-binding residues include histidine 214 and histidine 220. A compositionally biased stretch (low complexity) spans 317–340 (TSSTTTTTTTTTTTTTTEEPTTTT). The tract at residues 317–377 (TSSTTTTTTT…TPKPVERSRN (61 aa)) is disordered. Basic and acidic residues predominate over residues 342-351 (VEEKPKDKKV). Low complexity predominate over residues 352 to 370 (SSTTTTTKKPTTTTTTTPK). 3 disulfide bridges follow: cysteine 380–cysteine 414, cysteine 387–cysteine 407, and cysteine 396–cysteine 411. The ShKT 1 domain occupies 380–414 (CEDLNAHCGMWEQLGHCQHSVKYMAHYCRKACNLC). A disordered region spans residues 422–464 (TTTTPKPVPRNKEKENKSASSTTRGTSTATSTTPKTTTTTTSA). N-linked (GlcNAc...) asparagine glycosylation occurs at asparagine 437. The segment covering 439–464 (SASSTTRGTSTATSTTPKTTTTTTSA) has biased composition (low complexity). 3 disulfide bridges follow: cysteine 469/cysteine 503, cysteine 476/cysteine 496, and cysteine 485/cysteine 500. The region spanning 469–503 (CEDKNLFCSYWAKIGECNSESKFMKIFCKASCGKC) is the ShKT 2 domain.

Requires Zn(2+) as cofactor. In terms of tissue distribution, expressed in pharyngeal muscles and mc cells.

The protein localises to the secreted. Functionally, metalloprotease. The protein is Zinc metalloproteinase nas-14 (nas-14) of Caenorhabditis elegans.